Reading from the N-terminus, the 77-residue chain is Tachyplesin-1 (77 aa).

The signal sequence occupies residues 1 to 23; the sequence is MKKLVIALCLMMVLAVMVEEAEA. Cystine bridges form between Cys-26–Cys-39 and Cys-30–Cys-35. Arg-40 carries the arginine amide modification. The propeptide occupies 41–77; sequence GKRNEVRQYRDRGYDVRAIPEETFFTRQDEDEDDDEE.

This sequence belongs to the tachyplesin/polyphemusin family. In terms of tissue distribution, hemocytes.

It localises to the secreted. In terms of biological role, significantly inhibits the growth of Gram-negative and Gram-positive bacteria. This chain is Tachyplesin-1, found in Tachypleus tridentatus (Japanese horseshoe crab).